Consider the following 56-residue polypeptide: UPF0434 protein CbuK_1382 (56 aa).

The protein belongs to the UPF0434 family.

The polypeptide is UPF0434 protein CbuK_1382 (Coxiella burnetii (strain CbuK_Q154) (Coxiella burnetii (strain Q154))).